A 686-amino-acid polypeptide reads, in one-letter code: DNA ligase (686 aa).

NAD(+)-binding positions include 45–49 (DNEYD), 94–95 (SL), and Glu-127. The active-site N6-AMP-lysine intermediate is Lys-129. 4 residues coordinate NAD(+): Arg-150, Glu-187, Lys-302, and Lys-326. 4 residues coordinate Zn(2+): Cys-420, Cys-423, Cys-438, and Cys-444. A BRCT domain is found at 605–686 (LDNLPLEGQT…DEFLKMIGAS (82 aa)).

Belongs to the NAD-dependent DNA ligase family. LigA subfamily. It depends on Mg(2+) as a cofactor. The cofactor is Mn(2+).

It catalyses the reaction NAD(+) + (deoxyribonucleotide)n-3'-hydroxyl + 5'-phospho-(deoxyribonucleotide)m = (deoxyribonucleotide)n+m + AMP + beta-nicotinamide D-nucleotide.. DNA ligase that catalyzes the formation of phosphodiester linkages between 5'-phosphoryl and 3'-hydroxyl groups in double-stranded DNA using NAD as a coenzyme and as the energy source for the reaction. It is essential for DNA replication and repair of damaged DNA. This is DNA ligase from Psychrobacter sp. (strain PRwf-1).